A 151-amino-acid polypeptide reads, in one-letter code: Probable transport accessory protein MmpS1 (151 aa).

Transmembrane regions (helical) follow at residues Phe-8–Leu-28 and Val-81–Ala-101.

The protein belongs to the MmpS family.

It is found in the cell membrane. This is Probable transport accessory protein MmpS1 (mmpS1) from Mycobacterium tuberculosis (strain CDC 1551 / Oshkosh).